An 811-amino-acid chain; its full sequence is MIQRLGSSLVKFKSKIAGAIWRNLDDKLTEVVSLKDFGAKGDGKTNDQDAVNAAMASGKRIDGAGATYKVSSLPDMERFYNTRFVWERLAGQPLYYVSKGFINGELYKITDNPYYNAWPQDKAFVYENVIYAPYMGSDRHGVSRLHVSWVKSGDDGQTWSTPEWLTDMHPDYPTVNYHCMSMGVCRNRLFAMIETRTLAKNELTNCALWDRPMSRSLHLTGGITKAANQRYATIHVPDHGLFVGDFVNFSNSAVTGVSGDMKVATVIDKDNFTVLTPNQQTSDLNNAGKNWHMGTSFHKSPWRKTDLGLIPRVTEVHSFATIDNNGFVMGYHQGDVAPREVGLFYFPDAFNSPSNYVRRQIPSEYEPDAAEPCIKYYDGVLYLITRGTRGDRLGSSLHRSRDIGQTWESLRFPHNVHHTTLPFAKVGDDLIMFGSERAENEWEAGAPDDRYKASYPRTFYARLNVNNWNADDIEWVNITDQIYQGDIVNSSVGVGSVVVKDSFIYYIFGGENHFNPMTYGDNKDKDPFKGHGHPTDIYCYKMQIANDNRVSRKFTYGATPGQAIPTFMGTDGIRNIPAPLYFSDNIVTEDTKVGHLTLKASTSANIRSEMQMEGEYGFIGKSVPKDKPTGQRLIICGGEGTSSSSGAQITLHGSNSSNAKRITYNGNEHLFQGAPIMPAVDNQFAAGGPSNRFTTIYLGSDPVTTSDADHKYGISSINTKVLKAWSRVGFKQYGLNSEAERNLDSIHFGVLAQDIVAAFEAEGLDAIKYGIVSFEEGRYGVRYSEVLILEAAYTRHRLDKLEEMYATNKIS.

BNR repeat units follow at residues 150-161 (VKSGDDGQTWST) and 286-293 (NAGKNWHM). Residues glutamate 371 and arginine 386 contribute to the active site. Residues 398–409 (HRSRDIGQTWES) form a BNR 3 repeat. The active site involves arginine 437. The region spanning 706-808 (SDADHKYGIS…DKLEEMYATN (103 aa)) is the Peptidase S74 domain.

It belongs to the glycosyl hydrolase 58 family. Homotrimer. Interacts with sialic acid. Interacts with adapter protein gp37. Interacts with gp46. The N-terminus is blocked. In terms of processing, proteolytic cleavage and release of the chaperone in the host cytosol stabilizes the folded protein. The cleavage gives rise to the mature tail spike protein but is not essential for catalytic activity. However, release of the chaperone domain confers kinetic stability and processivity to the endosialidase.

The protein resides in the virion. The enzyme catalyses Endohydrolysis of (2-&gt;8)-alpha-sialosyl linkages in oligo- or poly(sialic) acids.. In terms of biological role, receptor binding protein, which mediates the attachment to the host capsule. Degrades the alpha-2,8-linked polysialic acid K1-type capsule by cleaving within the polymer chain of polysialic acid. Its function is as follows. The C-terminal chaperone protein mediates homotrimerization and proper folding of the catalytic endosialidase trimer. The chain is Tail spike protein (GP90) from Escherichia phage K1E (Bacteriophage K1E).